The sequence spans 206 residues: MSGIIGKKVGMTSVYDAVGNYVPCTVIEAGPCVITQIKTVETDGYKAVQLAFDDKKEKSTTKPLLGHFKKAGVSPKRKLVEFKGFENELTLGQSLAAQDVFVEGDFVDVVGTAKGRGFQGVVKRHGFGGVGGQTHGQHNRARHAGSIGACSFPARVFKGTRMAGRMGNNRVKIQNLQILKVYPEHNLLVVSGSVPGSKNSYVLIEK.

This sequence belongs to the universal ribosomal protein uL3 family. In terms of assembly, part of the 50S ribosomal subunit. Forms a cluster with proteins L14 and L19.

One of the primary rRNA binding proteins, it binds directly near the 3'-end of the 23S rRNA, where it nucleates assembly of the 50S subunit. The sequence is that of Large ribosomal subunit protein uL3 from Cytophaga hutchinsonii (strain ATCC 33406 / DSM 1761 / CIP 103989 / NBRC 15051 / NCIMB 9469 / D465).